The primary structure comprises 185 residues: Ribosome-recycling factor (185 aa).

The disordered stretch occupies residues 137–162; the sequence is DSIDKMVKDGEVGEDEGRRAEKELDD.

This sequence belongs to the RRF family.

The protein localises to the cytoplasm. In terms of biological role, responsible for the release of ribosomes from messenger RNA at the termination of protein biosynthesis. May increase the efficiency of translation by recycling ribosomes from one round of translation to another. This is Ribosome-recycling factor from Streptomyces coelicolor (strain ATCC BAA-471 / A3(2) / M145).